The following is a 1483-amino-acid chain: Cystic fibrosis transmembrane conductance regulator (1483 aa).

At 1 to 77 the chain is on the cytoplasmic side; it reads MQRSPLEKAS…KLINALRRCF (77 aa). Residues 78–98 traverse the membrane as a helical segment; it reads FWKFMFYGILLYLGEVTKAVQ. The region spanning 81 to 365 is the ABC transmembrane type-1 1 domain; the sequence is FMFYGILLYL…WAVQTWYDSL (285 aa). The Extracellular portion of the chain corresponds to 99 to 122; it reads PLLLGRIIASYDPDNKVERSIAIY. A helical transmembrane segment spans residues 123–146; sequence LGIGLCLLFVVRTLLLHPAIFGLH. At 147–195 the chain is on the cytoplasmic side; that stretch reads HIGMQMRIAMFSLIYKKTLKLSSRVLDKISIGQLISLLSNNLNKFDEGL. The helical transmembrane segment at 196–216 threads the bilayer; the sequence is ALAHFVWIVPLQVTLLMGLLW. The Extracellular segment spans residues 217 to 222; that stretch reads ELLQAS. Residues 223–243 form a helical membrane-spanning segment; that stretch reads AFCGLAFLIIVAFYQAGLGRM. At 244–298 the chain is on the cytoplasmic side; sequence MMKYRDKRGGKINERLVITSEMIENIQSVKAYCWEEAMEKMIENLRQTELKLTRK. Residues 299–319 form a helical membrane-spanning segment; the sequence is AAYVRYCNSSAFFFSGFFVVF. Residues 320–339 lie on the Extracellular side of the membrane; it reads LSVLPYALMKGIILRKIFTT. The chain crosses the membrane as a helical span at residues 340-358; the sequence is ISFCIVLRMAVTRQFPWAV. At 359 to 859 the chain is on the cytoplasmic side; the sequence is QTWYDSLGAI…YLRYITIHKS (501 aa). ATP-binding positions include W401, S434, 458-465, and Q493; that span reads GSTGAGKT. Positions 423–646 constitute an ABC transporter 1 domain; that stretch reads NGDNSLFFSN…RPDFSSKLMG (224 aa). C524 carries S-palmitoyl cysteine lipidation. Phosphoserine is present on residues S549 and S660. A disordered R region region spans residues 654–832; the sequence is SAERRNSILT…EEINEEDLKE (179 aa). The residue at position 670 (S670) is a Phosphoserine; by PKA. A Phosphoserine modification is found at S686. A Glycyl lysine isopeptide (Lys-Gly) (interchain with G-Cter in ubiquitin) cross-link involves residue K688. A phosphoserine mark is found at S700 and S712. Position 717 is a phosphothreonine (T717). S737, S768, S791, S796, and S814 each carry phosphoserine. A helical membrane pass occupies residues 860-880; it reads LIFVLIWCLIIFLAEVAVSLV. In terms of domain architecture, ABC transmembrane type-1 2 spans 860–1157; it reads LIFVLIWCLI…AVNSSIDVDS (298 aa). The Extracellular portion of the chain corresponds to 881–920; sequence FLLLFEKSPRQDTGNVTKSSNNSSYGVIITNTSSYYIIYI. N895, N901, N902, and N911 each carry an N-linked (GlcNAc...) asparagine glycan. A discontinuously helical membrane pass occupies residues 921–941; sequence YVGVADTLLALGLLRGLPLVH. Residues 942 to 992 lie on the Cytoplasmic side of the membrane; sequence TLITASKILHHKMLHSVLQAPMSTLNTLKAGGILNRFSKDIAILDDLLPLT. A helical membrane pass occupies residues 993-1013; it reads IFDFIQLILIVIGAVIVVSVL. Residues 1014–1015 are Extracellular-facing; that stretch reads EP. Residues 1016-1036 traverse the membrane as a helical segment; the sequence is YIFLATVPVIIAFVMLRAYFL. Over 1037-1097 the chain is Cytoplasmic; it reads HTSQQLKQLE…TANWFLYLST (61 aa). The helical transmembrane segment at 1098–1118 threads the bilayer; the sequence is LRWFQMRIEMIFVIFFIAVTF. Topologically, residues 1119–1132 are extracellular; that stretch reads ISILTTGDGEGRVG. A helical membrane pass occupies residues 1133–1153; it reads IILTLAMNIMNTLQWAVNSSI. The Cytoplasmic portion of the chain corresponds to 1154 to 1483; that stretch reads DVDSLMRSVS…TEEEVQETRL (330 aa). Residues 1213–1446 enclose the ABC transporter 2 domain; it reads MTVKDLTAKY…KSLFRQAISN (234 aa). Residues Y1222 and 1247–1254 contribute to the ATP site; that span reads GRTGSGKS. The interval 1389 to 1483 is interaction with GORASP2; it reads RTIKQAFADC…TEEEVQETRL (95 aa). C1398 is lipidated: S-palmitoyl cysteine. Residues S1447 and S1459 each carry the phosphoserine modification. The span at 1455–1465 shows a compositional bias: basic residues; the sequence is HRNSSKHKSRS. Residues 1455–1483 form a disordered region; that stretch reads HRNSSKHKSRSKIAALKEETEEEVQETRL. The segment covering 1473–1483 has biased composition (acidic residues); sequence ETEEEVQETRL. Positions 1481–1483 match the PDZ-binding motif; the sequence is TRL.

Belongs to the ABC transporter superfamily. ABCC family. CFTR transporter (TC 3.A.1.202) subfamily. In terms of assembly, monomer; does not require oligomerization for channel activity. May form oligomers in the membrane. Interacts with SLC26A3, SLC26A6 and NHERF1. Interacts with SHANK2. Interacts with MYO6. Interacts (via C-terminus) with GOPC (via PDZ domain); this promotes CFTR internalization and thereby decreases channel activity. Interacts with SLC4A7 through NHERF1. Found in a complex with MYO5B and RAB11A. Interacts with ANO1. Interacts with SLC26A8. Interacts with AHCYL1; the interaction increases CFTR activity. Interacts with CSE1L. The core-glycosylated form interacts with GORASP2 (via PDZ GRASP-type 1 domain) in respone to ER stress. Interacts with MARCHF2; the interaction leads to CFTR ubiqtuitination and degradation. Interacts with ADGRG2. N-glycosylated. In terms of processing, phosphorylated; cAMP treatment promotes phosphorylation and activates the channel. Dephosphorylation decreases the ATPase activity (in vitro). Phosphorylation at PKA sites activates the channel. Phosphorylation at PKC sites enhances the response to phosphorylation by PKA. Phosphorylated by AMPK; this inhibits channel activity. Post-translationally, ubiquitinated, leading to its degradation in the lysosome. Deubiquitination by USP10 in early endosomes enhances its endocytic recycling to the cell membrane. Ubiquitinated by RNF185 during ER stress. Ubiquitinated by MARCHF2.

The protein localises to the apical cell membrane. The protein resides in the early endosome membrane. It localises to the cell membrane. It is found in the recycling endosome membrane. Its subcellular location is the endoplasmic reticulum membrane. The protein localises to the nucleus. It catalyses the reaction ATP + H2O + closed Cl(-) channel = ADP + phosphate + open Cl(-) channel.. It carries out the reaction chloride(in) = chloride(out). The enzyme catalyses hydrogencarbonate(in) = hydrogencarbonate(out). The catalysed reaction is ATP + H2O = ADP + phosphate + H(+). Epithelial ion channel that plays an important role in the regulation of epithelial ion and water transport and fluid homeostasis. Mediates the transport of chloride ions across the cell membrane. The ion channel is also permeable to HCO(3)(-); selectivity depends on the extracellular chloride concentration. Exerts its function also by modulating the activity of other ion channels and transporters. Contributes to the regulation of the pH and the ion content of the epithelial fluid layer. Modulates the activity of the epithelial sodium channel (ENaC) complex, in part by regulating the cell surface expression of the ENaC complex. May regulate bicarbonate secretion and salvage in epithelial cells by regulating the transporter SLC4A7. Can inhibit the chloride channel activity of ANO1. Plays a role in the chloride and bicarbonate homeostasis during sperm epididymal maturation and capacitation. This is Cystic fibrosis transmembrane conductance regulator from Atelerix albiventris (Middle-African hedgehog).